We begin with the raw amino-acid sequence, 527 residues long: Outer capsid protein VP5 (527 aa).

Residues 1-42 (MGKFIKQLSKFGKKVGGALTSNTAKKIYKTIGDTAVRFAESD) are involved in membrane permeabilization.

This sequence belongs to the orbivirus VP5 family.

The protein resides in the virion. Functionally, VP5 protein is one of the two proteins (with VP2) which constitute the virus particle outer capsid. Acts as a membrane permeabilization protein that mediates release of viral particles from endosomal compartments into the cytoplasm. Permeabilization activity is probably negatively regulated by VP2 and is triggered by endosomal degradation of VP2 and exposure to low pH. The protein is Outer capsid protein VP5 (Segment-6) of Antilocapra americana (Pronghorn).